A 336-amino-acid chain; its full sequence is Formimidoylglutamase (336 aa).

His129, Asp160, His162, Asp164, Asp257, and Asp259 together coordinate Mn(2+).

It belongs to the arginase family. Mn(2+) serves as cofactor.

It catalyses the reaction N-formimidoyl-L-glutamate + H2O = formamide + L-glutamate. The protein operates within amino-acid degradation; L-histidine degradation into L-glutamate; L-glutamate from N-formimidoyl-L-glutamate (hydrolase route): step 1/1. Functionally, catalyzes the conversion of N-formimidoyl-L-glutamate to L-glutamate and formamide. This chain is Formimidoylglutamase, found in Vibrio vulnificus (strain CMCP6).